The following is a 198-amino-acid chain: MNASLRTDDVMRYQDARFQTLAAKLLPTQYLVVDDTTALTTTLGSCVAACLRDPVLKIGGMNHFLLPEGNAGDGAPARYGSYAMELLINDMLKRGAHRKRIEAKVFGGANVLKGFTSNPVGTRNAEFVRQYLQAEHIPIIAEDLCGIHPRKIWFFADTGRVVVQRLPHAHEAEVAATESAVRARLSKAPVTGGVELFE.

It belongs to the CheD family.

The enzyme catalyses L-glutaminyl-[protein] + H2O = L-glutamyl-[protein] + NH4(+). Functionally, probably deamidates glutamine residues to glutamate on methyl-accepting chemotaxis receptors (MCPs), playing an important role in chemotaxis. This Stenotrophomonas maltophilia (strain K279a) protein is Probable chemoreceptor glutamine deamidase CheD.